The following is an 834-amino-acid chain: ABC transporter A family member 11 (834 aa).

A run of 7 helical transmembrane segments spans residues Phe35–Asn55, Met188–Val208, Val235–Phe255, Phe269–Ile289, Asn297–Phe319, Pro324–Leu346, and Ser355–Ile375. The ABC transporter domain occupies Leu452 to Ile693. Position 495–502 (Gly495–Ser502) interacts with ATP. Polar residues predominate over residues Lys779–Ile789. Residues Lys779–Asn834 are disordered. Over residues Asn790 to Asn834 the composition is skewed to low complexity.

It belongs to the ABC transporter superfamily. ABCA family.

It is found in the membrane. This Dictyostelium discoideum (Social amoeba) protein is ABC transporter A family member 11 (abcA11).